The sequence spans 277 residues: 2-dehydro-3-deoxyphosphooctonate aldolase (277 aa).

It belongs to the KdsA family.

The protein resides in the cytoplasm. The catalysed reaction is D-arabinose 5-phosphate + phosphoenolpyruvate + H2O = 3-deoxy-alpha-D-manno-2-octulosonate-8-phosphate + phosphate. The protein operates within carbohydrate biosynthesis; 3-deoxy-D-manno-octulosonate biosynthesis; 3-deoxy-D-manno-octulosonate from D-ribulose 5-phosphate: step 2/3. It functions in the pathway bacterial outer membrane biogenesis; lipopolysaccharide biosynthesis. The chain is 2-dehydro-3-deoxyphosphooctonate aldolase from Dichelobacter nodosus (strain VCS1703A).